A 128-amino-acid chain; its full sequence is Glycine cleavage system H protein (128 aa).

The region spanning 25 to 107 (IITVGITHHA…YGAGWFFKLK (83 aa)) is the Lipoyl-binding domain. The residue at position 66 (Lys-66) is an N6-lipoyllysine.

It belongs to the GcvH family. In terms of assembly, the glycine cleavage system is composed of four proteins: P, T, L and H. The cofactor is (R)-lipoate.

Functionally, the glycine cleavage system catalyzes the degradation of glycine. The H protein shuttles the methylamine group of glycine from the P protein to the T protein. This Neisseria meningitidis serogroup A / serotype 4A (strain DSM 15465 / Z2491) protein is Glycine cleavage system H protein.